A 462-amino-acid chain; its full sequence is EPD1-interacting receptor-like cytoplasmic serine/threonine-protein kinase 5A (462 aa).

The region spanning 85–366 (FSSANFLGEG…DVVNILEPLL (282 aa)) is the Protein kinase domain. ATP-binding positions include 91 to 99 (LGEGGFGPV) and lysine 120. Residues tyrosine 165 and tyrosine 167 each carry the phosphotyrosine modification. Aspartate 215 (proton acceptor) is an active-site residue.

This sequence belongs to the protein kinase superfamily. Ser/Thr protein kinase family. In terms of assembly, interacts with the Verticillium dahliae elicitor EPD1 (AC G2WWH6). In terms of processing, phosphorylated at Tyr-165 and Tyr-167 in the presence of pathogen-associated molecular patterns (PAMPs); this triggers the expression of pathogenesis-related genes (e.g. PR5 and PR16). As to expression, mostly expressed in roots and, to a lesser extent, in leaves.

Its subcellular location is the cell membrane. The enzyme catalyses L-seryl-[protein] + ATP = O-phospho-L-seryl-[protein] + ADP + H(+). It catalyses the reaction L-threonyl-[protein] + ATP = O-phospho-L-threonyl-[protein] + ADP + H(+). Its function is as follows. Required for pathogen-associated molecular pattern (PAMP, e.g. chitin and flg22)-triggered immunity (PTI) involving reactive oxygen species (ROS) accumulation and triggering plant defense, including defense-related gene expression (e.g. PR1 and LOX). Ensures specific recognition of the EPD1 effector of Verticillium dahliae, resulting in a hypersensitive response known as effector-triggered immunity (ETI), characterized by the activation of programmed cell death to limit infection by the pathogen. Priming plants with the incompatible pathogen V.dahliae leads to an increased resistance to compatible pathogens, as a result of systemic acquired resistance (SAR). The sequence is that of EPD1-interacting receptor-like cytoplasmic serine/threonine-protein kinase 5A from Gossypium barbadense (Sea Island cotton).